A 95-amino-acid polypeptide reads, in one-letter code: Aspartyl/glutamyl-tRNA(Asn/Gln) amidotransferase subunit C (95 aa).

This sequence belongs to the GatC family. Heterotrimer of A, B and C subunits.

The enzyme catalyses L-glutamyl-tRNA(Gln) + L-glutamine + ATP + H2O = L-glutaminyl-tRNA(Gln) + L-glutamate + ADP + phosphate + H(+). It carries out the reaction L-aspartyl-tRNA(Asn) + L-glutamine + ATP + H2O = L-asparaginyl-tRNA(Asn) + L-glutamate + ADP + phosphate + 2 H(+). Allows the formation of correctly charged Asn-tRNA(Asn) or Gln-tRNA(Gln) through the transamidation of misacylated Asp-tRNA(Asn) or Glu-tRNA(Gln) in organisms which lack either or both of asparaginyl-tRNA or glutaminyl-tRNA synthetases. The reaction takes place in the presence of glutamine and ATP through an activated phospho-Asp-tRNA(Asn) or phospho-Glu-tRNA(Gln). This chain is Aspartyl/glutamyl-tRNA(Asn/Gln) amidotransferase subunit C, found in Caulobacter sp. (strain K31).